We begin with the raw amino-acid sequence, 358 residues long: MSRVQCLRLAAVIASISHLIFLVWFVCWNSVLENNEDCVYATRSLAAQVQLGELGANMSTETRLRIRGAAAEPVSVGPFNRSLVYVINSDASLLYSPRETQDGRCFANTFHKTDMAAVMKVYPDGKNVVLVLEMADCMAYLWFFQVRTATAALLMYLAFLCVNRQRRGFGPWLDSASRVSAEAYYLNYWTTLAARVFLKVRYLKLSRFLREIEYRREQTWRQFSIDTLGFYLMHPLALLLRAIETILYFASLVASATVLRVNFDPCSVVLPNHVKVFAWVFVAALGALEVVSAIDHLRRETRSARDAAAVIRPTNIIAACCANIISHVLLRMLYGAALVLVVIGALKYEREIQTRLLG.

A signal peptide spans 1 to 33 (MSRVQCLRLAAVIASISHLIFLVWFVCWNSVLE). Topologically, residues 34-141 (NNEDCVYATR…LEMADCMAYL (108 aa)) are extracellular. N-linked (GlcNAc...) asparagine; by host glycosylation is found at N57 and N80. The helical transmembrane segment at 142–162 (WFFQVRTATAALLMYLAFLCV) threads the bilayer. The Cytoplasmic segment spans residues 163 to 235 (NRQRRGFGPW…DTLGFYLMHP (73 aa)). The chain crosses the membrane as a helical span at residues 236-256 (LALLLRAIETILYFASLVASA). Residues 257–273 (TVLRVNFDPCSVVLPNH) lie on the Extracellular side of the membrane. Residues 274–294 (VKVFAWVFVAALGALEVVSAI) traverse the membrane as a helical segment. Topologically, residues 295-323 (DHLRRETRSARDAAAVIRPTNIIAACCAN) are cytoplasmic. A helical transmembrane segment spans residues 324–344 (IISHVLLRMLYGAALVLVVIG). Residues 345-358 (ALKYEREIQTRLLG) are Extracellular-facing.

The protein belongs to the alphaherpesvirinae glycoprotein K family. In terms of assembly, interacts (via UL20 interaction region) with protein UL20 (via N-terminus); this interaction probably plays a role in the coordinate transport of protein UL20 and gK to the trans-Golgi network (TGN), and is required for the cell surface expression of gK.

It is found in the host cell membrane. The protein resides in the host endosome membrane. The protein localises to the host Golgi apparatus membrane. In terms of biological role, glycoprotein that probably modulates membrane fusion events during secondary envelopment of cytoplasmic capsids that bud into specific trans-Golgi network (TGN)-derived membranes. Also plays a role, together with gB, in virus-induced cell-to-cell fusion (syncytia formation). Seems to block fusion of virions with infected-cell membranes. This Psittacid herpesvirus 1 (isolate Amazon parrot/-/97-0001/1997) (PsHV-1) protein is Envelope glycoprotein K (gK).